An 882-amino-acid polypeptide reads, in one-letter code: Valine--tRNA ligase (882 aa).

Positions 45–55 match the 'HIGH' region motif; that stretch reads PNVTGKLHLGH. The short motif at 519–523 is the 'KMSKS' region element; the sequence is KMSKS. Residue Lys522 coordinates ATP. Residues 808–882 are a coiled coil; it reads LADLLNVEEE…RIAEMKKIKS (75 aa).

The protein belongs to the class-I aminoacyl-tRNA synthetase family. ValS type 1 subfamily. In terms of assembly, monomer.

Its subcellular location is the cytoplasm. The catalysed reaction is tRNA(Val) + L-valine + ATP = L-valyl-tRNA(Val) + AMP + diphosphate. In terms of biological role, catalyzes the attachment of valine to tRNA(Val). As ValRS can inadvertently accommodate and process structurally similar amino acids such as threonine, to avoid such errors, it has a 'posttransfer' editing activity that hydrolyzes mischarged Thr-tRNA(Val) in a tRNA-dependent manner. The sequence is that of Valine--tRNA ligase from Streptococcus pyogenes serotype M28 (strain MGAS6180).